A 149-amino-acid polypeptide reads, in one-letter code: Urease accessory protein UreE (149 aa).

The protein belongs to the UreE family.

Its subcellular location is the cytoplasm. Its function is as follows. Involved in urease metallocenter assembly. Binds nickel. Probably functions as a nickel donor during metallocenter assembly. The protein is Urease accessory protein UreE of Prochlorococcus marinus (strain MIT 9301).